Reading from the N-terminus, the 159-residue chain is 2-C-methyl-D-erythritol 2,4-cyclodiphosphate synthase (159 aa).

The a divalent metal cation site is built by Asp-10 and His-12. 4-CDP-2-C-methyl-D-erythritol 2-phosphate contacts are provided by residues 10-12 (DVH) and 36-37 (HS). His-44 lines the a divalent metal cation pocket. Residues 58 to 60 (DIG), 63 to 67 (FPDTD), 102 to 108 (AQAPKMA), 134 to 137 (TTTE), Phe-141, and Arg-144 each bind 4-CDP-2-C-methyl-D-erythritol 2-phosphate.

It belongs to the IspF family. Homotrimer. Requires a divalent metal cation as cofactor.

The enzyme catalyses 4-CDP-2-C-methyl-D-erythritol 2-phosphate = 2-C-methyl-D-erythritol 2,4-cyclic diphosphate + CMP. It functions in the pathway isoprenoid biosynthesis; isopentenyl diphosphate biosynthesis via DXP pathway; isopentenyl diphosphate from 1-deoxy-D-xylulose 5-phosphate: step 4/6. Its function is as follows. Involved in the biosynthesis of isopentenyl diphosphate (IPP) and dimethylallyl diphosphate (DMAPP), two major building blocks of isoprenoid compounds. Catalyzes the conversion of 4-diphosphocytidyl-2-C-methyl-D-erythritol 2-phosphate (CDP-ME2P) to 2-C-methyl-D-erythritol 2,4-cyclodiphosphate (ME-CPP) with a corresponding release of cytidine 5-monophosphate (CMP). This is 2-C-methyl-D-erythritol 2,4-cyclodiphosphate synthase from Shewanella frigidimarina (strain NCIMB 400).